The following is a 126-amino-acid chain: Glycine cleavage system H protein (126 aa).

In terms of domain architecture, Lipoyl-binding spans 22–104; the sequence is VAYVGITDYA…YGEGWLIKMK (83 aa). Lys-63 carries the post-translational modification N6-lipoyllysine.

Belongs to the GcvH family. In terms of assembly, the glycine cleavage system is composed of four proteins: P, T, L and H. The cofactor is (R)-lipoate.

The glycine cleavage system catalyzes the degradation of glycine. The H protein shuttles the methylamine group of glycine from the P protein to the T protein. This Bacteroides fragilis (strain YCH46) protein is Glycine cleavage system H protein.